We begin with the raw amino-acid sequence, 513 residues long: Probable cytosol aminopeptidase (513 aa).

Mn(2+) is bound by residues Lys275 and Asp280. Lys287 is an active-site residue. Mn(2+)-binding residues include Asp298, Asp357, and Glu359. The active site involves Arg361.

The protein belongs to the peptidase M17 family. Requires Mn(2+) as cofactor.

It is found in the cytoplasm. The catalysed reaction is Release of an N-terminal amino acid, Xaa-|-Yaa-, in which Xaa is preferably Leu, but may be other amino acids including Pro although not Arg or Lys, and Yaa may be Pro. Amino acid amides and methyl esters are also readily hydrolyzed, but rates on arylamides are exceedingly low.. It carries out the reaction Release of an N-terminal amino acid, preferentially leucine, but not glutamic or aspartic acids.. In terms of biological role, presumably involved in the processing and regular turnover of intracellular proteins. Catalyzes the removal of unsubstituted N-terminal amino acids from various peptides. This Streptomyces avermitilis (strain ATCC 31267 / DSM 46492 / JCM 5070 / NBRC 14893 / NCIMB 12804 / NRRL 8165 / MA-4680) protein is Probable cytosol aminopeptidase.